The primary structure comprises 283 residues: MHFFSPAKLNIFLQLLGKREDGFHEIVTRYQAVSFGDQLSLSVSSRDSFQIINDCQLEISNNSIWKSTALFRQYTGITDPVSWRVVKHIPIGSGLAGGSSNAATALFALNQMFQTGLSDEELRSLAEKVGMDTPFFFSSGSALGLGRGEKVVTLNELVVDRYILYFSNKGVLTSEAFAVVKPSDCSLSKDLEYARNDLENPVFRLRLDLKEKKRWLEDLWKGIPVYVGLTGSGATLFVRYPKALEKNSAYATQIQKIIALSGGVSTSPIQRDTPNWYPTILEA.

Lysine 8 is an active-site residue. 90–100 (PIGSGLAGGSS) provides a ligand contact to ATP. Aspartate 132 is an active-site residue.

Belongs to the GHMP kinase family. IspE subfamily.

The catalysed reaction is 4-CDP-2-C-methyl-D-erythritol + ATP = 4-CDP-2-C-methyl-D-erythritol 2-phosphate + ADP + H(+). It participates in isoprenoid biosynthesis; isopentenyl diphosphate biosynthesis via DXP pathway; isopentenyl diphosphate from 1-deoxy-D-xylulose 5-phosphate: step 3/6. Its function is as follows. Catalyzes the phosphorylation of the position 2 hydroxy group of 4-diphosphocytidyl-2C-methyl-D-erythritol. The protein is 4-diphosphocytidyl-2-C-methyl-D-erythritol kinase of Chlamydia muridarum (strain MoPn / Nigg).